The primary structure comprises 171 residues: Co-chaperone protein HscB homolog (171 aa).

The J domain occupies Asn2–Glu74.

It belongs to the HscB family. In terms of assembly, interacts with HscA and stimulates its ATPase activity.

Functionally, co-chaperone involved in the maturation of iron-sulfur cluster-containing proteins. Seems to help targeting proteins to be folded toward HscA. This Aliivibrio salmonicida (strain LFI1238) (Vibrio salmonicida (strain LFI1238)) protein is Co-chaperone protein HscB homolog.